Here is a 236-residue protein sequence, read N- to C-terminus: Truncated formate dehydrogenase 2 (236 aa).

NAD(+)-binding positions include 36–37, Asp57, 104–108, Thr130, Asp156, and 185–188; these read RI, PLHKD, and HISG.

It belongs to the D-isomer specific 2-hydroxyacid dehydrogenase family. FDH subfamily.

The sequence is that of Truncated formate dehydrogenase 2 from Saccharomyces cerevisiae (strain ATCC 204508 / S288c) (Baker's yeast).